Reading from the N-terminus, the 426-residue chain is Putative glutamate--cysteine ligase 2 (426 aa).

Belongs to the glutamate--cysteine ligase type 2 family. YbdK subfamily.

The catalysed reaction is L-cysteine + L-glutamate + ATP = gamma-L-glutamyl-L-cysteine + ADP + phosphate + H(+). ATP-dependent carboxylate-amine ligase which exhibits weak glutamate--cysteine ligase activity. This is Putative glutamate--cysteine ligase 2 from Bradyrhizobium diazoefficiens (strain JCM 10833 / BCRC 13528 / IAM 13628 / NBRC 14792 / USDA 110).